A 327-amino-acid chain; its full sequence is Phenylalanine--tRNA ligase alpha subunit (327 aa).

A Mg(2+)-binding site is contributed by E252.

Belongs to the class-II aminoacyl-tRNA synthetase family. Phe-tRNA synthetase alpha subunit type 1 subfamily. As to quaternary structure, tetramer of two alpha and two beta subunits. Requires Mg(2+) as cofactor.

The protein resides in the cytoplasm. It catalyses the reaction tRNA(Phe) + L-phenylalanine + ATP = L-phenylalanyl-tRNA(Phe) + AMP + diphosphate + H(+). The polypeptide is Phenylalanine--tRNA ligase alpha subunit (Shewanella sediminis (strain HAW-EB3)).